The chain runs to 751 residues: WD repeat-containing protein 91 (751 aa).

The stretch at 188 to 212 (IQEENESLRHKLFALQAESSRMKKE) forms a coiled coil. A disordered region spans residues 264–395 (LSQSKKGPAR…ASSTESVGVR (132 aa)). Residues 278 to 287 (SGASPTQTGS) show a composition bias toward polar residues. Basic and acidic residues predominate over residues 334–346 (RLQEHGKERRELL). The span at 377–391 (QAETSTKMPASSTES) shows a compositional bias: polar residues. WD repeat units lie at residues 410 to 449 (EHHS…QTKA), 452 to 492 (ISKS…NLCE), 497 to 559 (EDMP…QQLQ), 564 to 603 (PEPI…CAMS), 606 to 645 (AHDG…LKIS), 668 to 706 (VQFP…KVLE), and 713 to 751 (GHRA…AQKS).

This sequence belongs to the WD repeat WDR91 family.

Its subcellular location is the early endosome membrane. The protein localises to the late endosome membrane. Its function is as follows. Functions as a negative regulator of the PI3 kinase/PI3K activity associated with endosomal membranes. By modifying the phosphatidylinositol 3-phosphate/PtdInsP3 content of endosomal membranes may regulate endosome fusion, recycling, sorting and early to late endosome transport. The chain is WD repeat-containing protein 91 from Gallus gallus (Chicken).